Consider the following 1356-residue polypeptide: RHO1 GDP-GTP exchange protein 2 (1356 aa).

S2 is modified (N-acetylserine). Disordered stretches follow at residues 74-94 (RRSG…EMKG) and 109-175 (EVPD…PRNE). S76 carries the post-translational modification Phosphoserine. Polar residues-rich tracts occupy residues 109-125 (EVPD…TPVS) and 147-157 (HIYSTSNSASR). Residue S193 is modified to Phosphoserine. 5 disordered regions span residues 202–291 (LKKQ…RSMS), 303–362 (SFQS…SSSN), 383–409 (SVSG…VMSA), 531–571 (GNHS…SQQK), and 626–645 (NISM…TSSV). Residues 204 to 221 (KQSSFSTGSASTTPTQAR) show a composition bias toward polar residues. At S223 the chain carries Phosphoserine. The segment covering 235–244 (SSKDLHEQHQ) has biased composition (basic and acidic residues). Positions 250-265 (QHNNINNHNNNNTNNN) are enriched in low complexity. Residues 271–281 (VGSSNSNYPQH) are compositionally biased toward polar residues. The span at 282–291 (SHSISSRSMS) shows a compositional bias: low complexity. Positions 303–325 (SFQSKTSNSRKATQKYDITSNPF) are enriched in polar residues. The segment covering 329–338 (HHHHHHHHSS) has biased composition (basic residues). Composition is skewed to low complexity over residues 339–362 (NSHS…SSSN) and 383–401 (SVSG…TPLS). Phosphoserine is present on residues S566 and S628. Positions 659-846 (KRQEAIYEVY…RDFMKRIDQA (188 aa)) constitute a DH domain. Residues 1034-1336 (TNKINSVTSC…RLLQTSTQEI (303 aa)) form the CNH domain.

Functionally, stimulates the exchange of RHO1 GDP-bound form into GTP-bound form. The sequence is that of RHO1 GDP-GTP exchange protein 2 (ROM2) from Saccharomyces cerevisiae (strain ATCC 204508 / S288c) (Baker's yeast).